The primary structure comprises 136 residues: Calcitonin (136 aa).

The N-terminal stretch at Met1 to Ala25 is a signal peptide. Residues Val26–Ser82 constitute a propeptide that is removed on maturation. Position 42 is a phosphoserine (Ser42). The disordered stretch occupies residues Leu64–Arg84. Cys85 and Cys91 form a disulfide bridge. Asn87 carries an N-linked (GlcNAc...) asparagine glycan. Positions Gly114 to Asn136 are disordered. Pro116 bears the Proline amide mark. A compositionally biased stretch (basic and acidic residues) spans Lys118–His130. Residues Asp121 to Asn136 constitute a propeptide that is removed on maturation.

It belongs to the calcitonin family.

It is found in the secreted. Functionally, calcitonin is a peptide hormone that causes a rapid but short-lived drop in the level of calcium and phosphate in blood by promoting the incorporation of those ions in the bones. Calcitonin function is mediated by the calcitonin receptor/CALCR and the CALCR-RAMP2 (AMYR2) receptor complex. This chain is Calcitonin, found in Rattus norvegicus (Rat).